Reading from the N-terminus, the 453-residue chain is Allantoinase (453 aa).

Histidine 59, histidine 61, lysine 146, histidine 186, histidine 242, and aspartate 315 together coordinate Zn(2+). At lysine 146 the chain carries N6-carboxylysine.

The protein belongs to the metallo-dependent hydrolases superfamily. Allantoinase family. As to quaternary structure, homotetramer. Requires Zn(2+) as cofactor. In terms of processing, carboxylation allows a single lysine to coordinate two zinc ions.

The enzyme catalyses (S)-allantoin + H2O = allantoate + H(+). Its pathway is nitrogen metabolism; (S)-allantoin degradation; allantoate from (S)-allantoin: step 1/1. Its function is as follows. Catalyzes the conversion of allantoin (5-ureidohydantoin) to allantoic acid by hydrolytic cleavage of the five-member hydantoin ring. This chain is Allantoinase, found in Escherichia coli O139:H28 (strain E24377A / ETEC).